Consider the following 250-residue polypeptide: Small ribosomal subunit protein uS3 (250 aa).

One can recognise a KH type-2 domain in the interval 39 to 111 (IRTLIKNHYP…KVQINIFEVK (73 aa)).

Belongs to the universal ribosomal protein uS3 family. Part of the 30S ribosomal subunit. Forms a tight complex with proteins S10 and S14.

Binds the lower part of the 30S subunit head. Binds mRNA in the 70S ribosome, positioning it for translation. The protein is Small ribosomal subunit protein uS3 of Rubus stunt phytoplasma.